We begin with the raw amino-acid sequence, 290 residues long: tRNA-cytidine(32) 2-sulfurtransferase (290 aa).

Positions 36–41 (SGGKDS) match the PP-loop motif motif. Residues Cys-111, Cys-114, and Cys-202 each contribute to the [4Fe-4S] cluster site. A disordered region spans residues 259–290 (DPWLDAEDEEAEDCGEPAGDGVVSLGGARGGR). Acidic residues predominate over residues 262–273 (LDAEDEEAEDCG).

It belongs to the TtcA family. As to quaternary structure, homodimer. Mg(2+) is required as a cofactor. It depends on [4Fe-4S] cluster as a cofactor.

It is found in the cytoplasm. The catalysed reaction is cytidine(32) in tRNA + S-sulfanyl-L-cysteinyl-[cysteine desulfurase] + AH2 + ATP = 2-thiocytidine(32) in tRNA + L-cysteinyl-[cysteine desulfurase] + A + AMP + diphosphate + H(+). Its pathway is tRNA modification. Catalyzes the ATP-dependent 2-thiolation of cytidine in position 32 of tRNA, to form 2-thiocytidine (s(2)C32). The sulfur atoms are provided by the cysteine/cysteine desulfurase (IscS) system. This is tRNA-cytidine(32) 2-sulfurtransferase from Anaeromyxobacter dehalogenans (strain 2CP-C).